The following is a 188-amino-acid chain: Elongation factor P (188 aa).

Belongs to the elongation factor P family.

It localises to the cytoplasm. It participates in protein biosynthesis; polypeptide chain elongation. Its function is as follows. Involved in peptide bond synthesis. Stimulates efficient translation and peptide-bond synthesis on native or reconstituted 70S ribosomes in vitro. Probably functions indirectly by altering the affinity of the ribosome for aminoacyl-tRNA, thus increasing their reactivity as acceptors for peptidyl transferase. The sequence is that of Elongation factor P from Methylobacterium sp. (strain 4-46).